The sequence spans 74 residues: uncharacterized protein (74 aa).

An N-terminal signal peptide occupies residues 1 to 19; that stretch reads MNPGFDAVDQETAAAQAVA.

This is an uncharacterized protein from Mycobacterium tuberculosis (strain ATCC 25618 / H37Rv).